Here is a 255-residue protein sequence, read N- to C-terminus: 5-oxoprolinase subunit A (255 aa).

Belongs to the LamB/PxpA family. Forms a complex composed of PxpA, PxpB and PxpC.

The enzyme catalyses 5-oxo-L-proline + ATP + 2 H2O = L-glutamate + ADP + phosphate + H(+). Functionally, catalyzes the cleavage of 5-oxoproline to form L-glutamate coupled to the hydrolysis of ATP to ADP and inorganic phosphate. The sequence is that of 5-oxoprolinase subunit A from Campylobacter jejuni subsp. jejuni serotype O:6 (strain 81116 / NCTC 11828).